We begin with the raw amino-acid sequence, 469 residues long: Cell division protein FtsP (469 aa).

The segment at residues 1-29 (MPRLSRRQLLKTAAISTALSTVPAPLLAA) is a signal peptide (tat-type signal). Residues 228–286 (IRLRLLNASLARAYDLRLDNDQEMLLIAQDLSFLPKAKSVKSLVLSPGERAEILVNMNE) enclose the Plastocyanin-like domain.

Belongs to the FtsP family. Predicted to be exported by the Tat system. The position of the signal peptide cleavage has not been experimentally proven.

The protein resides in the periplasm. Cell division protein that is required for growth during stress conditions. May be involved in protecting or stabilizing the divisomal assembly under conditions of stress. The polypeptide is Cell division protein FtsP (Haemophilus influenzae (strain 86-028NP)).